Here is a 503-residue protein sequence, read N- to C-terminus: ATP synthase subunit alpha (503 aa).

169–176 (GDRKTGKT) lines the ATP pocket.

It belongs to the ATPase alpha/beta chains family. F-type ATPases have 2 components, CF(1) - the catalytic core - and CF(0) - the membrane proton channel. CF(1) has five subunits: alpha(3), beta(3), gamma(1), delta(1), epsilon(1). CF(0) has three main subunits: a(1), b(2) and c(9-12). The alpha and beta chains form an alternating ring which encloses part of the gamma chain. CF(1) is attached to CF(0) by a central stalk formed by the gamma and epsilon chains, while a peripheral stalk is formed by the delta and b chains.

Its subcellular location is the cell membrane. It catalyses the reaction ATP + H2O + 4 H(+)(in) = ADP + phosphate + 5 H(+)(out). Its function is as follows. Produces ATP from ADP in the presence of a proton gradient across the membrane. The alpha chain is a regulatory subunit. This chain is ATP synthase subunit alpha, found in Lactobacillus delbrueckii subsp. bulgaricus (strain ATCC BAA-365 / Lb-18).